The following is a 249-amino-acid chain: Putative [LysW]-aminoadipate/[LysW]-glutamate kinase (249 aa).

Substrate contacts are provided by arginine 64 and asparagine 166.

The protein belongs to the acetylglutamate kinase family. LysZ subfamily.

Its subcellular location is the cytoplasm. It catalyses the reaction [amino-group carrier protein]-C-terminal-N-(1,4-dicarboxybutan-1-yl)-L-glutamine + ATP = [amino-group carrier protein]-C-terminal-N-(1-carboxy-5-phosphooxy-5-oxopentan-1-yl)-L-glutamine + ADP. The enzyme catalyses [amino-group carrier protein]-C-terminal-gamma-(L-glutamyl)-L-glutamate + ATP = [amino-group carrier protein]-C-terminal-gamma-(5-phospho-L-glutamyl)-L-glutamate + ADP. It functions in the pathway amino-acid biosynthesis; L-lysine biosynthesis via AAA pathway; L-lysine from L-alpha-aminoadipate (Thermus route): step 2/5. Its pathway is amino-acid biosynthesis; L-arginine biosynthesis. In terms of biological role, involved in both the arginine and lysine biosynthetic pathways. Phosphorylates the LysW-bound precursors glutamate (for arginine biosynthesis), respectively alpha-aminoadipate (for lysine biosynthesis). The polypeptide is Putative [LysW]-aminoadipate/[LysW]-glutamate kinase (Pyrococcus horikoshii (strain ATCC 700860 / DSM 12428 / JCM 9974 / NBRC 100139 / OT-3)).